We begin with the raw amino-acid sequence, 1058 residues long: Carbamoyl phosphate synthase large chain (1058 aa).

The segment at 1–401 is carboxyphosphate synthetic domain; that stretch reads MPKRTDIQKI…SLLKACRSLE (401 aa). Residues Arg-129, Arg-169, Gly-175, Gly-176, Arg-208, Ile-210, Glu-215, Gly-241, Ile-242, His-243, Gln-284, and Glu-298 each coordinate ATP. Residues 133–327 form the ATP-grasp 1 domain; the sequence is KQLMEELEQP…IAKLAAKIAV (195 aa). 3 residues coordinate Mg(2+): Gln-284, Glu-298, and Asn-300. Positions 284, 298, and 300 each coordinate Mn(2+). Residues 402–546 form an oligomerization domain region; sequence IGVHHNEIPE…YSTYGWENES (145 aa). Residues 547–929 are carbamoyl phosphate synthetic domain; it reads IRSDKESVLV…ALYKAFEASY (383 aa). In terms of domain architecture, ATP-grasp 2 spans 671-861; the sequence is EQALKELDIP…MAQVATKLIL (191 aa). Residues Arg-707, Ser-746, Ile-748, Glu-752, Gly-777, Val-778, His-779, Ser-780, Gln-820, and Glu-832 each contribute to the ATP site. The Mg(2+) site is built by Gln-820, Glu-832, and Asn-834. Mn(2+) is bound by residues Gln-820, Glu-832, and Asn-834. The MGS-like domain occupies 930 to 1058; that stretch reads LHLPTFGNVV…ESRSFVTEAI (129 aa). An allosteric domain region spans residues 930 to 1058; sequence LHLPTFGNVV…ESRSFVTEAI (129 aa).

The protein belongs to the CarB family. As to quaternary structure, composed of two chains; the small (or glutamine) chain promotes the hydrolysis of glutamine to ammonia, which is used by the large (or ammonia) chain to synthesize carbamoyl phosphate. Tetramer of heterodimers (alpha,beta)4. The cofactor is Mg(2+). Mn(2+) serves as cofactor.

It carries out the reaction hydrogencarbonate + L-glutamine + 2 ATP + H2O = carbamoyl phosphate + L-glutamate + 2 ADP + phosphate + 2 H(+). The enzyme catalyses hydrogencarbonate + NH4(+) + 2 ATP = carbamoyl phosphate + 2 ADP + phosphate + 2 H(+). It participates in amino-acid biosynthesis; L-arginine biosynthesis; carbamoyl phosphate from bicarbonate: step 1/1. It functions in the pathway pyrimidine metabolism; UMP biosynthesis via de novo pathway; (S)-dihydroorotate from bicarbonate: step 1/3. Large subunit of the glutamine-dependent carbamoyl phosphate synthetase (CPSase). CPSase catalyzes the formation of carbamoyl phosphate from the ammonia moiety of glutamine, carbonate, and phosphate donated by ATP, constituting the first step of 2 biosynthetic pathways, one leading to arginine and/or urea and the other to pyrimidine nucleotides. The large subunit (synthetase) binds the substrates ammonia (free or transferred from glutamine from the small subunit), hydrogencarbonate and ATP and carries out an ATP-coupled ligase reaction, activating hydrogencarbonate by forming carboxy phosphate which reacts with ammonia to form carbamoyl phosphate. This is Carbamoyl phosphate synthase large chain from Streptococcus pneumoniae (strain ATCC BAA-255 / R6).